Consider the following 475-residue polypeptide: RNA pseudouridine synthase 3, mitochondrial (475 aa).

The transit peptide at 1–15 (MLCRRRRVGAAVRWL) directs the protein to the mitochondrion. The interval 40 to 74 (RLGKPKPGPRPRQLLSLPPFPGGGDGDPLPGRKAA) is disordered. The S4 RNA-binding domain occupies 90-160 (ADVPQEVVQA…GEIKKRYETI (71 aa)). Residue D230 is part of the active site.

Belongs to the pseudouridine synthase RluA family.

It is found in the mitochondrion. It carries out the reaction a uridine in RNA = a pseudouridine in RNA. The protein is RNA pseudouridine synthase 3, mitochondrial of Oryza sativa subsp. japonica (Rice).